Here is a 253-residue protein sequence, read N- to C-terminus: MQRTIIAANWKMNKNFQEGLQLAKEITQFIQAEPLAGAQIILFPSFIHLEGISKLLTPEVKLHLGAQNCHDQIAGAFTGEVSAAMLASIDVRYVLVGHSERRQNFAEDNDLIAKKIDAILSCKLQPVFCCGEPLSVRESNQHYAFIEQQIAESLFHLTPDELQQVIIAYEPIWAIGTGLIPSLAEIEEMQQTIRNILKKQYNTVLADNMAILYGGSCNASNITKLISLPGINGVLIGGASLHFKEFIHILRSL.

A substrate-binding site is contributed by 9 to 11; that stretch reads NWK. Catalysis depends on His-98, which acts as the Electrophile. Glu-170 serves as the catalytic Proton acceptor. Residues Gly-176, Ser-216, and 237 to 238 contribute to the substrate site; that span reads GG.

It belongs to the triosephosphate isomerase family. Homodimer.

The protein localises to the cytoplasm. It carries out the reaction D-glyceraldehyde 3-phosphate = dihydroxyacetone phosphate. It functions in the pathway carbohydrate biosynthesis; gluconeogenesis. It participates in carbohydrate degradation; glycolysis; D-glyceraldehyde 3-phosphate from glycerone phosphate: step 1/1. Involved in the gluconeogenesis. Catalyzes stereospecifically the conversion of dihydroxyacetone phosphate (DHAP) to D-glyceraldehyde-3-phosphate (G3P). This is Triosephosphate isomerase from Amoebophilus asiaticus (strain 5a2).